Reading from the N-terminus, the 1235-residue chain is ATP-dependent helicase/nuclease subunit A (1235 aa).

Residues Thr-12–Arg-482 form the UvrD-like helicase ATP-binding domain. Ala-33–Thr-40 serves as a coordination point for ATP. The UvrD-like helicase C-terminal domain occupies Ala-509–Gly-800.

The protein belongs to the helicase family. AddA subfamily. As to quaternary structure, heterodimer of AddA and AddB/RexB. Mg(2+) serves as cofactor.

The enzyme catalyses Couples ATP hydrolysis with the unwinding of duplex DNA by translocating in the 3'-5' direction.. It catalyses the reaction ATP + H2O = ADP + phosphate + H(+). In terms of biological role, the heterodimer acts as both an ATP-dependent DNA helicase and an ATP-dependent, dual-direction single-stranded exonuclease. Recognizes the chi site generating a DNA molecule suitable for the initiation of homologous recombination. The AddA nuclease domain is required for chi fragment generation; this subunit has the helicase and 3' -&gt; 5' nuclease activities. The protein is ATP-dependent helicase/nuclease subunit A of Listeria welshimeri serovar 6b (strain ATCC 35897 / DSM 20650 / CCUG 15529 / CIP 8149 / NCTC 11857 / SLCC 5334 / V8).